Reading from the N-terminus, the 188-residue chain is Elongation factor P (188 aa).

It belongs to the elongation factor P family.

The protein localises to the cytoplasm. The protein operates within protein biosynthesis; polypeptide chain elongation. Its function is as follows. Involved in peptide bond synthesis. Stimulates efficient translation and peptide-bond synthesis on native or reconstituted 70S ribosomes in vitro. Probably functions indirectly by altering the affinity of the ribosome for aminoacyl-tRNA, thus increasing their reactivity as acceptors for peptidyl transferase. The protein is Elongation factor P of Sulfurimonas denitrificans (strain ATCC 33889 / DSM 1251) (Thiomicrospira denitrificans (strain ATCC 33889 / DSM 1251)).